An 89-amino-acid polypeptide reads, in one-letter code: Small ribosomal subunit protein uS15 (89 aa).

Belongs to the universal ribosomal protein uS15 family. Part of the 30S ribosomal subunit. Forms a bridge to the 50S subunit in the 70S ribosome, contacting the 23S rRNA.

In terms of biological role, one of the primary rRNA binding proteins, it binds directly to 16S rRNA where it helps nucleate assembly of the platform of the 30S subunit by binding and bridging several RNA helices of the 16S rRNA. Functionally, forms an intersubunit bridge (bridge B4) with the 23S rRNA of the 50S subunit in the ribosome. This chain is Small ribosomal subunit protein uS15, found in Cupriavidus pinatubonensis (strain JMP 134 / LMG 1197) (Cupriavidus necator (strain JMP 134)).